Reading from the N-terminus, the 161-residue chain is Nucleotide-binding protein Pnec_0318 (161 aa).

This sequence belongs to the YajQ family.

Nucleotide-binding protein. The sequence is that of Nucleotide-binding protein Pnec_0318 from Polynucleobacter necessarius subsp. necessarius (strain STIR1).